A 40-amino-acid chain; its full sequence is Large ribosomal subunit protein bL36 (40 aa).

The protein belongs to the bacterial ribosomal protein bL36 family.

The chain is Large ribosomal subunit protein bL36 from Coxiella burnetii (strain Dugway 5J108-111).